Consider the following 1485-residue polypeptide: Chromosome partition protein MukB (1485 aa).

34–41 (GGNGAGKS) contacts ATP. Coiled-coil stretches lie at residues 337-480 (LNLV…QAYQ) and 509-605 (QHLA…PVWL). Positions 666-783 (PSGAEDARLI…EVPLFGRAAR (118 aa)) are flexible hinge. Coiled-coil stretches lie at residues 835–915 (EAEI…IQQH) and 977–1116 (GMLT…AKAG).

Belongs to the SMC family. MukB subfamily. Homodimerization via its hinge domain. Binds to DNA via its C-terminal region. Interacts, and probably forms a ternary complex, with MukE and MukF via its C-terminal region. The complex formation is stimulated by calcium or magnesium. Interacts with tubulin-related protein FtsZ.

The protein resides in the cytoplasm. It localises to the nucleoid. Functionally, plays a central role in chromosome condensation, segregation and cell cycle progression. Functions as a homodimer, which is essential for chromosome partition. Involved in negative DNA supercoiling in vivo, and by this means organize and compact chromosomes. May achieve or facilitate chromosome segregation by condensation DNA from both sides of a centrally located replisome during cell division. This is Chromosome partition protein MukB from Yersinia pseudotuberculosis serotype IB (strain PB1/+).